The following is a 392-amino-acid chain: Proteasome-activating nucleotidase (392 aa).

Residues 19–53 are a coiled coil; the sequence is IVRLLEEKIESLTKELEKLRQDLNWYKGELEKLLA. ATP contacts are provided by residues 178 to 183 and Tyr317; that span reads GTGKTL. Residues 390–392 form a docks into pockets in the proteasome alpha-ring to cause gate opening region; sequence KYV.

This sequence belongs to the AAA ATPase family. As to quaternary structure, homohexamer. The hexameric complex has a two-ring architecture resembling a top hat that caps the 20S proteasome core at one or both ends. Upon ATP-binding, the C-terminus of PAN interacts with the alpha-rings of the proteasome core by binding to the intersubunit pockets.

The protein localises to the cytoplasm. Its function is as follows. ATPase which is responsible for recognizing, binding, unfolding and translocation of substrate proteins into the archaeal 20S proteasome core particle. Is essential for opening the gate of the 20S proteasome via an interaction with its C-terminus, thereby allowing substrate entry and access to the site of proteolysis. Thus, the C-termini of the proteasomal ATPase function like a 'key in a lock' to induce gate opening and therefore regulate proteolysis. Unfolding activity requires energy from ATP hydrolysis, whereas ATP binding alone promotes ATPase-20S proteasome association which triggers gate opening, and supports translocation of unfolded substrates. The chain is Proteasome-activating nucleotidase from Sulfurisphaera tokodaii (strain DSM 16993 / JCM 10545 / NBRC 100140 / 7) (Sulfolobus tokodaii).